The primary structure comprises 342 residues: Cyclin-D3-1 (342 aa).

Over residues 322-334 (VGSPATNYESSAS) the composition is skewed to polar residues. Residues 322–342 (VGSPATNYESSASSKRRRICR) are disordered.

The protein belongs to the cyclin family. Cyclin D subfamily.

The protein is Cyclin-D3-1 (CYCD3-1) of Oryza sativa subsp. japonica (Rice).